Consider the following 162-residue polypeptide: uncharacterized protein (162 aa).

The N-terminal stretch at 1–19 is a signal peptide; that stretch reads MARVYILFFSVFFVFPLFS. Transmembrane regions (helical) follow at residues 53-75 and 105-127; these read LSIG…IRLI and IVFG…YRAV.

It localises to the cell membrane. This is an uncharacterized protein from Treponema pallidum (strain Nichols).